The sequence spans 260 residues: NH(3)-dependent NAD(+) synthetase (260 aa).

31-38 (GLSGGLDS) contributes to the ATP binding site. Asp37 contributes to the Mg(2+) binding site. Arg112 contacts deamido-NAD(+). Thr132 contacts ATP. Glu137 is a Mg(2+) binding site. The ATP site is built by Lys161 and Ser183.

It belongs to the NAD synthetase family. As to quaternary structure, homodimer.

The enzyme catalyses deamido-NAD(+) + NH4(+) + ATP = AMP + diphosphate + NAD(+) + H(+). The protein operates within cofactor biosynthesis; NAD(+) biosynthesis; NAD(+) from deamido-NAD(+) (ammonia route): step 1/1. Catalyzes the ATP-dependent amidation of deamido-NAD to form NAD. Uses ammonia as a nitrogen source. In Helicobacter pylori (strain P12), this protein is NH(3)-dependent NAD(+) synthetase.